The following is a 644-amino-acid chain: Exoribonuclease 2 (644 aa).

The region spanning 189 to 516 (REDLTALNFV…NHRLLKAIIT (328 aa)) is the RNB domain. Residues 561–643 (DTRFPAEIID…ETRNVVARPV (83 aa)) form the S1 motif domain.

It belongs to the RNR ribonuclease family. RNase II subfamily.

It is found in the cytoplasm. The catalysed reaction is Exonucleolytic cleavage in the 3'- to 5'-direction to yield nucleoside 5'-phosphates.. Involved in mRNA degradation. Hydrolyzes single-stranded polyribonucleotides processively in the 3' to 5' direction. This Yersinia enterocolitica serotype O:8 / biotype 1B (strain NCTC 13174 / 8081) protein is Exoribonuclease 2.